The chain runs to 356 residues: Dual-specificity RNA methyltransferase RlmN (356 aa).

The Proton acceptor role is filled by Glu-89. The Radical SAM core domain occupies 108–341 (KHARYTICVS…CTIRESKGLD (234 aa)). A disulfide bridge links Cys-115 with Cys-346. [4Fe-4S] cluster is bound by residues Cys-122, Cys-126, and Cys-129. S-adenosyl-L-methionine contacts are provided by residues 172-173 (GE), Ser-204, 227-229 (SLH), and Asn-303. Cys-346 serves as the catalytic S-methylcysteine intermediate.

The protein belongs to the radical SAM superfamily. RlmN family. [4Fe-4S] cluster is required as a cofactor.

Its subcellular location is the cytoplasm. It carries out the reaction adenosine(2503) in 23S rRNA + 2 reduced [2Fe-2S]-[ferredoxin] + 2 S-adenosyl-L-methionine = 2-methyladenosine(2503) in 23S rRNA + 5'-deoxyadenosine + L-methionine + 2 oxidized [2Fe-2S]-[ferredoxin] + S-adenosyl-L-homocysteine. It catalyses the reaction adenosine(37) in tRNA + 2 reduced [2Fe-2S]-[ferredoxin] + 2 S-adenosyl-L-methionine = 2-methyladenosine(37) in tRNA + 5'-deoxyadenosine + L-methionine + 2 oxidized [2Fe-2S]-[ferredoxin] + S-adenosyl-L-homocysteine. Functionally, specifically methylates position 2 of adenine 2503 in 23S rRNA and position 2 of adenine 37 in tRNAs. m2A2503 modification seems to play a crucial role in the proofreading step occurring at the peptidyl transferase center and thus would serve to optimize ribosomal fidelity. This Campylobacter lari (strain RM2100 / D67 / ATCC BAA-1060) protein is Dual-specificity RNA methyltransferase RlmN.